A 486-amino-acid polypeptide reads, in one-letter code: Cardiolipin synthase A (486 aa).

2 helical membrane passes run 3–23 (TFYTVVNWLVILGYWLLIAGV) and 38–58 (MAWLLIIYILPLVGIIAYLSF). 2 PLD phosphodiesterase domains span residues 219–246 (MDLRQHRKMVMIDNYIAYTGSMNMVDPR) and 399–426 (EGGLLHTKSVLVDGELSLVGTVNLDMRS). Active-site residues include histidine 224, lysine 226, aspartate 231, histidine 404, lysine 406, and aspartate 411.

Belongs to the phospholipase D family. Cardiolipin synthase subfamily. ClsA sub-subfamily.

The protein resides in the cell inner membrane. It catalyses the reaction 2 a 1,2-diacyl-sn-glycero-3-phospho-(1'-sn-glycerol) = a cardiolipin + glycerol. Functionally, catalyzes the reversible phosphatidyl group transfer from one phosphatidylglycerol molecule to another to form cardiolipin (CL) (diphosphatidylglycerol) and glycerol. The polypeptide is Cardiolipin synthase A (Klebsiella pneumoniae (strain 342)).